The sequence spans 74 residues: Anaphase-promoting complex subunit 13 (74 aa).

A disordered region spans residues 33–53 (LNELPEPEQDNGGTTESVKEQ).

This sequence belongs to the APC13 family. As to quaternary structure, the mammalian APC/C is composed at least of 14 distinct subunits ANAPC1, ANAPC2, CDC27/APC3, ANAPC4, ANAPC5, CDC16/APC6, ANAPC7, CDC23/APC8, ANAPC10, ANAPC11, CDC26/APC12, ANAPC13, ANAPC15 and ANAPC16 that assemble into a complex of at least 19 chains with a combined molecular mass of around 1.2 MDa; APC/C interacts with FZR1 and FBXO5.

The protein resides in the nucleus. The protein operates within protein modification; protein ubiquitination. Functionally, component of the anaphase promoting complex/cyclosome (APC/C), a cell cycle-regulated E3 ubiquitin ligase that controls progression through mitosis and the G1 phase of the cell cycle. The APC/C complex acts by mediating ubiquitination and subsequent degradation of target proteins: it mainly mediates the formation of 'Lys-11'-linked polyubiquitin chains and, to a lower extent, the formation of 'Lys-48'- and 'Lys-63'-linked polyubiquitin chains. The APC/C complex catalyzes assembly of branched 'Lys-11'-/'Lys-48'-linked branched ubiquitin chains on target proteins. The polypeptide is Anaphase-promoting complex subunit 13 (ANAPC13) (Bos taurus (Bovine)).